Consider the following 670-residue polypeptide: Solute carrier organic anion transporter family member 1A2 (670 aa).

Over 1-20 (MGETEKRIETHRIRCLSKLK) the chain is Cytoplasmic. A helical membrane pass occupies residues 21 to 40 (MFLLAITCAFVSKTLSGSYM). Residues 41–59 (NSMLTQIERQFNIPTSLVG) lie on the Extracellular side of the membrane. A helical transmembrane segment spans residues 60-80 (FINGSFEIGNLLLIIFVSYFG). The Cytoplasmic segment spans residues 81 to 86 (TKLHRP). Residues 87–111 (IMIGIGCVVMGLGCFLKSLPHFLMN) form a helical membrane-spanning segment. The Extracellular segment spans residues 112–155 (QYEYESTVSVSGNLSSNSFLCMENGTQILRPTQDPSECTKEVKS). Asn124 and Asn135 each carry an N-linked (GlcNAc...) asparagine glycan. Residues 156-184 (LMWVYVLVGNIVRGMGETPILPLGISYIE) form a helical membrane-spanning segment. Topologically, residues 185-203 (DFAKFENSPLYIGLVETGA) are cytoplasmic. Residues 204 to 224 (IIGPLIGLLLASFCANVYVDT) form a helical membrane-spanning segment. Topologically, residues 225 to 242 (GFVNTDDLIITPTDTRWV) are extracellular. A helical membrane pass occupies residues 243–267 (GAWWFGFLICAGVNVLTAIPFFFLP). The Cytoplasmic portion of the chain corresponds to 268 to 311 (NTLPKEGLETNADIIKNENEDKQKEEVKKEKYGITKDFLPFMKS). A helical transmembrane segment spans residues 312 to 333 (LSCNPIYMLFILVSVIQFNAFV). The Extracellular portion of the chain corresponds to 334-353 (NMISFMPKYLEQQYGISSSD). The chain crosses the membrane as a helical span at residues 354–377 (AIFLMGIYNLPPICIGYIIGGLIM). Residues 378-381 (KKFK) are Cytoplasmic-facing. A helical membrane pass occupies residues 382–405 (ITVKQAAHIGCWLSLLEYLLYFLS). The Extracellular segment spans residues 406 to 513 (FLMTCENSSV…PDCSLMLQYF (108 aa)). Asn412 and Asn419 each carry an N-linked (GlcNAc...) asparagine glycan. The Kazal-like domain maps to 433–488 (NDIFADCNVDCNCPSKIWDPVCGNNGLSYLSACLAGCETSIGTGINMVFQNCSCIQ). Intrachain disulfides connect Cys439–Cys469, Cys445–Cys465, and Cys454–Cys486. A helical transmembrane segment spans residues 514–536 (LILSAMSSFIYSLAAIPGYMVLL). At 537 to 545 (RCMKSEEKS) the chain is on the cytoplasmic side. A helical transmembrane segment spans residues 546–571 (LGVGLHTFCTRVFAGIPAPIYFGALM). Over 572–605 (DSTCLHWGTLKCGESGACRIYDSTTFRYIYLGLP) the chain is Extracellular. Residues 606 to 623 (AALRGSSFVPALIILILL) form a helical membrane-spanning segment. Over 624-670 (RKCHLPGENASSGTELIETKVKGKENECKDIYQKSTVLKDDELKTKL) the chain is Cytoplasmic.

This sequence belongs to the organo anion transporter (TC 2.A.60) family. Higher expression in the brain than in liver and kidney. Expressed in brain neurons in both cortex and hippocampus. Expressed in placental trophoblasts. Also expressed in lung and testes at lower levels. Expressed in the eye (at protein level). Expressed in the retina in the outer and inner nuclear layers, the inner plexiform layer and the ganglion cell layer. Expressed in liver and prostate. In testis, primarily localized to the basal membrane of Sertoli cells and weakly expressed in Leydig cells and within the tubules. Expressed in fetal brain and liver.

The protein localises to the cell membrane. It is found in the basal cell membrane. It carries out the reaction taurocholate(out) = taurocholate(in). It catalyses the reaction glycocholate(out) = glycocholate(in). The catalysed reaction is taurochenodeoxycholate(out) = taurochenodeoxycholate(in). The enzyme catalyses tauroursodeoxycholate(out) = tauroursodeoxycholate(in). It carries out the reaction dehydroepiandrosterone 3-sulfate(out) = dehydroepiandrosterone 3-sulfate(in). It catalyses the reaction estrone 3-sulfate(out) = estrone 3-sulfate(in). The catalysed reaction is 3,3',5'-triiodo-L-thyronine(out) = 3,3',5'-triiodo-L-thyronine(in). The enzyme catalyses L-thyroxine(out) = L-thyroxine(in). It carries out the reaction taurodeoxycholate(out) = taurodeoxycholate(in). It catalyses the reaction glycodeoxycholate(out) = glycodeoxycholate(in). The catalysed reaction is glycochenodeoxycholate(out) = glycochenodeoxycholate(in). The enzyme catalyses glycoursodeoxycholate(out) = glycoursodeoxycholate(in). It carries out the reaction 17beta-estradiol 17-O-(beta-D-glucuronate)(out) = 17beta-estradiol 17-O-(beta-D-glucuronate)(in). It catalyses the reaction prostaglandin E2(out) = prostaglandin E2(in). The catalysed reaction is substance P(out) = substance P(in). Its activity is regulated as follows. Transport activity is inhibited by the grapefruit juice component naringin. In terms of biological role, na(+)-independent transporter that mediates the cellular uptake of a broad range of organic anions such as the endogenous bile salts cholate and deoxycholate, either in their unconjugated or conjugated forms (taurocholate and glycocholate), at the plasmam membrane. Responsible for intestinal absorption of bile acids. Transports dehydroepiandrosterone 3-sulfate (DHEAS), a major circulating steroid secreted by the adrenal cortex, as well as estrone 3-sulfate and 17beta-estradiol 17-O-(beta-D-glucuronate). Mediates apical uptake of all-trans-retinol (atROL) across human retinal pigment epithelium, which is essential to maintaining the integrity of the visual cycle and thus vision. Involved in the uptake of clinically used drugs. Capable of thyroid hormone transport (both T3 or 3,3',5'-triiodo-L-thyronine, and T4 or L-tyroxine). Also transports prostaglandin E2. Plays roles in blood-brain and -cerebrospinal fluid barrier transport of organic anions and signal mediators, and in hormone uptake by neural cells. May also play a role in the reuptake of neuropeptides such as substance P/TAC1 and vasoactive intestinal peptide/VIP released from retinal neurons. May play an important role in plasma and tissue distribution of the structurally diverse chemotherapeutic drugs methotrexate and paclitaxel. Shows a pH-sensitive substrate specificity which may be ascribed to the protonation state of the binding site and leads to a stimulation of substrate transport in an acidic microenvironment. Hydrogencarbonate/HCO3(-) acts as the probable counteranion that exchanges for organic anions. May contribute to regulate the transport of organic compounds in testis across the blood-testis-barrier. The chain is Solute carrier organic anion transporter family member 1A2 (SLCO1A2) from Homo sapiens (Human).